Reading from the N-terminus, the 363-residue chain is Holliday junction branch migration complex subunit RuvB (363 aa).

Positions 1 to 32 (MSDVERTEFEIPGGIPPRRNGGQGRAADTNVD) are disordered. A large ATPase domain (RuvB-L) region spans residues 27–207 (ADTNVDANLK…FGFTAQMEFY (181 aa)). Residues Leu-46, Arg-47, Gly-88, Lys-91, Thr-92, Thr-93, 154 to 156 (EDF), Arg-197, Tyr-207, and Arg-244 each bind ATP. Residue Thr-92 coordinates Mg(2+). The segment at 208–278 (DVPDLTKVVK…AANAALIVFD (71 aa)) is small ATPAse domain (RuvB-S). The interval 281 to 363 (EVGLDRLDRA…EPPEGTIGDY (83 aa)) is head domain (RuvB-H). Positions 336 and 341 each coordinate DNA.

This sequence belongs to the RuvB family. Homohexamer. Forms an RuvA(8)-RuvB(12)-Holliday junction (HJ) complex. HJ DNA is sandwiched between 2 RuvA tetramers; dsDNA enters through RuvA and exits via RuvB. An RuvB hexamer assembles on each DNA strand where it exits the tetramer. Each RuvB hexamer is contacted by two RuvA subunits (via domain III) on 2 adjacent RuvB subunits; this complex drives branch migration. In the full resolvosome a probable DNA-RuvA(4)-RuvB(12)-RuvC(2) complex forms which resolves the HJ.

Its subcellular location is the cytoplasm. The catalysed reaction is ATP + H2O = ADP + phosphate + H(+). Its function is as follows. The RuvA-RuvB-RuvC complex processes Holliday junction (HJ) DNA during genetic recombination and DNA repair, while the RuvA-RuvB complex plays an important role in the rescue of blocked DNA replication forks via replication fork reversal (RFR). RuvA specifically binds to HJ cruciform DNA, conferring on it an open structure. The RuvB hexamer acts as an ATP-dependent pump, pulling dsDNA into and through the RuvAB complex. RuvB forms 2 homohexamers on either side of HJ DNA bound by 1 or 2 RuvA tetramers; 4 subunits per hexamer contact DNA at a time. Coordinated motions by a converter formed by DNA-disengaged RuvB subunits stimulates ATP hydrolysis and nucleotide exchange. Immobilization of the converter enables RuvB to convert the ATP-contained energy into a lever motion, pulling 2 nucleotides of DNA out of the RuvA tetramer per ATP hydrolyzed, thus driving DNA branch migration. The RuvB motors rotate together with the DNA substrate, which together with the progressing nucleotide cycle form the mechanistic basis for DNA recombination by continuous HJ branch migration. Branch migration allows RuvC to scan DNA until it finds its consensus sequence, where it cleaves and resolves cruciform DNA. This Corynebacterium glutamicum (strain R) protein is Holliday junction branch migration complex subunit RuvB.